Here is a 445-residue protein sequence, read N- to C-terminus: Exodeoxyribonuclease 7 large subunit (445 aa).

This sequence belongs to the XseA family. As to quaternary structure, heterooligomer composed of large and small subunits.

The protein localises to the cytoplasm. The catalysed reaction is Exonucleolytic cleavage in either 5'- to 3'- or 3'- to 5'-direction to yield nucleoside 5'-phosphates.. In terms of biological role, bidirectionally degrades single-stranded DNA into large acid-insoluble oligonucleotides, which are then degraded further into small acid-soluble oligonucleotides. The polypeptide is Exodeoxyribonuclease 7 large subunit (Staphylococcus epidermidis (strain ATCC 12228 / FDA PCI 1200)).